Reading from the N-terminus, the 141-residue chain is Nucleoside diphosphate kinase (141 aa).

Residues K11, F59, R87, T93, R104, and N114 each contribute to the ATP site. The Pros-phosphohistidine intermediate role is filled by H117.

Belongs to the NDK family. As to quaternary structure, homotetramer. Requires Mg(2+) as cofactor.

The protein resides in the cytoplasm. It catalyses the reaction a 2'-deoxyribonucleoside 5'-diphosphate + ATP = a 2'-deoxyribonucleoside 5'-triphosphate + ADP. The enzyme catalyses a ribonucleoside 5'-diphosphate + ATP = a ribonucleoside 5'-triphosphate + ADP. In terms of biological role, major role in the synthesis of nucleoside triphosphates other than ATP. The ATP gamma phosphate is transferred to the NDP beta phosphate via a ping-pong mechanism, using a phosphorylated active-site intermediate. The polypeptide is Nucleoside diphosphate kinase (Ralstonia nicotianae (strain ATCC BAA-1114 / GMI1000) (Ralstonia solanacearum)).